The primary structure comprises 242 residues: uncharacterized protein (242 aa).

The signal sequence occupies residues 1-17 (MKFSPAYLLAFAPIVAA). Residues asparagine 47, asparagine 86, asparagine 122, asparagine 159, and asparagine 178 are each glycosylated (N-linked (GlcNAc...) asparagine). The disordered stretch occupies residues 176 to 214 (NANESTADGQAQSGSSGSSSDSGSHSGHSSATQTSSTTA). Positions 180 to 214 (STADGQAQSGSSGSSSDSGSHSGHSSATQTSSTTA) are enriched in low complexity. Residue alanine 218 is the site of GPI-like-anchor amidated alanine attachment. The propeptide at 219–242 (GAVALETAAWGILGAAVVGGLAVL) is removed in mature form.

In terms of processing, the GPI-like anchor contains a phosphoceramide lipid group. The anchor position has not been determined.

It is found in the cell membrane. This is an uncharacterized protein from Aspergillus fumigatus (strain ATCC MYA-4609 / CBS 101355 / FGSC A1100 / Af293) (Neosartorya fumigata).